A 259-amino-acid chain; its full sequence is uncharacterized protein (259 aa).

Disordered regions lie at residues 22-68 (GLQP…VSFG), 111-133 (REEQKLRKRSRQNDDGSDDDEVE), and 181-202 (LGGKKETEKMPMAARRGMKKKQ). The span at 50 to 63 (NEEEDAISDMEDKE) shows a compositional bias: acidic residues. Ser-127 bears the Phosphoserine mark.

This is an uncharacterized protein from Schizosaccharomyces pombe (strain 972 / ATCC 24843) (Fission yeast).